The sequence spans 48 residues: Putative protein P' (48 aa).

This is Putative protein P' from Bos taurus (Bovine).